Consider the following 378-residue polypeptide: Glutamate 5-kinase (378 aa).

Residue lysine 14 coordinates ATP. 3 residues coordinate substrate: serine 54, aspartate 141, and asparagine 153. 173–174 (SD) provides a ligand contact to ATP. One can recognise a PUA domain in the interval 279–356 (AGRLTVDAGA…DEISAILGYD (78 aa)).

The protein belongs to the glutamate 5-kinase family.

It localises to the cytoplasm. The enzyme catalyses L-glutamate + ATP = L-glutamyl 5-phosphate + ADP. It participates in amino-acid biosynthesis; L-proline biosynthesis; L-glutamate 5-semialdehyde from L-glutamate: step 1/2. Catalyzes the transfer of a phosphate group to glutamate to form L-glutamate 5-phosphate. This Brucella canis (strain ATCC 23365 / NCTC 10854 / RM-666) protein is Glutamate 5-kinase.